The primary structure comprises 358 residues: Trace amine-associated receptor 7e (358 aa).

Residues 1–47 (MATGDDSFLWDQDSILSRDLFSATSAELCYENLNRSCVRSPYSPGPR) are Extracellular-facing. N-linked (GlcNAc...) asparagine glycosylation is present at Asn-34. 2 disulfides stabilise this stretch: Cys-37/Cys-201 and Cys-120/Cys-205. The helical transmembrane segment at 48-68 (LILYAVFGFGAVLAVCGNLLV) threads the bilayer. Over 69–83 (MTSILHFRQLHSPAN) the chain is Cytoplasmic. Residues 84–104 (FLVASLACADFLVGLTVMPFS) form a helical membrane-spanning segment. The Extracellular portion of the chain corresponds to 105–121 (TVRSVEGCWYFGEIYCK). Residues 122–143 (LHTCFDVSFCSSSIFHLCFISV) form a helical membrane-spanning segment. Residues 144–166 (DRYIAVSDPLIYPTRFTASVSNK) are Cytoplasmic-facing. A helical membrane pass occupies residues 167–187 (CITFSWLLSISYGFSLIYTGA). Residues 188–212 (SEAGLEDLVSALTCVGGCQLAVNQS) are Extracellular-facing. Asn-210 carries an N-linked (GlcNAc...) asparagine glycan. A helical membrane pass occupies residues 213–233 (WVFINFLLFLIPTLVMITVYS). Topologically, residues 234–274 (KIFLIAKQQAQNIEKMSKQTARASDSYKDRVAKRERKAAKT) are cytoplasmic. A helical membrane pass occupies residues 275–295 (LGIAVAAFLLSWLPYFIDSFI). The Extracellular segment spans residues 296-309 (DAFLGFITPTYVYE). A helical membrane pass occupies residues 310–333 (ILVWIAYYNSAMNPLIYAFFYPWF). Residues 334 to 358 (RKAIKLTVTGKILRENSSTTNLFPE) are Cytoplasmic-facing.

The protein belongs to the G-protein coupled receptor 1 family. In terms of tissue distribution, specifically expressed in neurons of the olfactory epithelium.

Its subcellular location is the cell membrane. In terms of biological role, olfactory receptor specific for N,N-dimethylalkylamines trace amines. Trace amine compounds are enriched in animal body fluids and act on trace amine-associated receptors (TAARs) to elicit both intraspecific and interspecific innate behaviors. Ligand-binding causes a conformation change that triggers signaling via G(s)-class of G alpha proteins (GNAL or GNAS). In Mus musculus (Mouse), this protein is Trace amine-associated receptor 7e.